The sequence spans 518 residues: Sensory neuron membrane protein 1 (518 aa).

Over 1–8 (MKTAEKLG) the chain is Cytoplasmic. The chain crosses the membrane as a helical span at residues 9 to 29 (IIGTTISIFGIGFGWGVFPWL). The Extracellular portion of the chain corresponds to 30-456 (IRMQIGRVSL…ELFRILQFLD (427 aa)). 6 N-linked (GlcNAc...) asparagine glycosylation sites follow: asparagine 64, asparagine 186, asparagine 225, asparagine 316, asparagine 334, and asparagine 381. Intrachain disulfides connect cysteine 265–cysteine 330, cysteine 294–cysteine 349, and cysteine 332–cysteine 338. The helical transmembrane segment at 457-477 (VIKWVITLFGAGVVSGGVGLY) threads the bilayer. The Cytoplasmic portion of the chain corresponds to 478–518 (YKEKNSLPITPTSSATSKKIDNPTDKTTTHELGHTNFGYIN).

The protein belongs to the CD36 family.

The protein localises to the cell membrane. In terms of biological role, plays an olfactory role that is not restricted to pheromone sensitivity. This Pediculus humanus subsp. corporis (Body louse) protein is Sensory neuron membrane protein 1.